We begin with the raw amino-acid sequence, 254 residues long: DNA repair protein RecO (254 aa).

Belongs to the RecO family.

Its function is as follows. Involved in DNA repair and RecF pathway recombination. This Gluconacetobacter diazotrophicus (strain ATCC 49037 / DSM 5601 / CCUG 37298 / CIP 103539 / LMG 7603 / PAl5) protein is DNA repair protein RecO.